The sequence spans 208 residues: Imidazoleglycerol-phosphate dehydratase (208 aa).

This sequence belongs to the imidazoleglycerol-phosphate dehydratase family.

The protein localises to the cytoplasm. It carries out the reaction D-erythro-1-(imidazol-4-yl)glycerol 3-phosphate = 3-(imidazol-4-yl)-2-oxopropyl phosphate + H2O. It functions in the pathway amino-acid biosynthesis; L-histidine biosynthesis; L-histidine from 5-phospho-alpha-D-ribose 1-diphosphate: step 6/9. The sequence is that of Imidazoleglycerol-phosphate dehydratase from Psychrobacter sp. (strain PRwf-1).